A 273-amino-acid polypeptide reads, in one-letter code: MTAHGASREATAAARERLDALTDSTSVDVVQLADELAAVTALLDREVSLRRVLTDPAQAAEAKAELAGRLFGSQIGGPATDLVTGMVRSRWSQSRDLVDAVEELADIADLTAAQRAGVLDDVEDELFRFGRIVSSNPALRAALTDRTADKAARSELVHSLLGGRATATTERLVTRLVTTPRGRSLEAGLESLSKLAAERRDRLVAVVTTAVPLSDTQKQRLGAALATLYGRQMHLNIDVDPEVLGGMRVQVGDEVINGSIADRLEDARRRMAS.

This sequence belongs to the ATPase delta chain family. As to quaternary structure, F-type ATPases have 2 components, F(1) - the catalytic core - and F(0) - the membrane proton channel. F(1) has five subunits: alpha(3), beta(3), gamma(1), delta(1), epsilon(1). F(0) has three main subunits: a(1), b(2) and c(10-14). The alpha and beta chains form an alternating ring which encloses part of the gamma chain. F(1) is attached to F(0) by a central stalk formed by the gamma and epsilon chains, while a peripheral stalk is formed by the delta and b chains.

It is found in the cell membrane. F(1)F(0) ATP synthase produces ATP from ADP in the presence of a proton or sodium gradient. F-type ATPases consist of two structural domains, F(1) containing the extramembraneous catalytic core and F(0) containing the membrane proton channel, linked together by a central stalk and a peripheral stalk. During catalysis, ATP synthesis in the catalytic domain of F(1) is coupled via a rotary mechanism of the central stalk subunits to proton translocation. Functionally, this protein is part of the stalk that links CF(0) to CF(1). It either transmits conformational changes from CF(0) to CF(1) or is implicated in proton conduction. The chain is ATP synthase subunit delta from Streptomyces avermitilis (strain ATCC 31267 / DSM 46492 / JCM 5070 / NBRC 14893 / NCIMB 12804 / NRRL 8165 / MA-4680).